Here is a 222-residue protein sequence, read N- to C-terminus: Protein-L-isoaspartate O-methyltransferase (222 aa).

Residue serine 70 is part of the active site.

Belongs to the methyltransferase superfamily. L-isoaspartyl/D-aspartyl protein methyltransferase family.

Its subcellular location is the cytoplasm. The enzyme catalyses [protein]-L-isoaspartate + S-adenosyl-L-methionine = [protein]-L-isoaspartate alpha-methyl ester + S-adenosyl-L-homocysteine. In terms of biological role, catalyzes the methyl esterification of L-isoaspartyl residues in peptides and proteins that result from spontaneous decomposition of normal L-aspartyl and L-asparaginyl residues. It plays a role in the repair and/or degradation of damaged proteins. The sequence is that of Protein-L-isoaspartate O-methyltransferase from Jannaschia sp. (strain CCS1).